We begin with the raw amino-acid sequence, 129 residues long: Virion-associated protein (129 aa).

2 coiled-coil regions span residues 1 to 31 (MANL…ILEL) and 38 to 59 (IKES…LIND). Residues 122-129 (PAGWPNQF) are capsid binding.

It belongs to the caulimovirus ORF III family. In terms of assembly, homotetramer, through coiled-coil domain. Homotrimer when bound on icosehadral capsid. Interacts with capsid protein, and with movement protein.

Its subcellular location is the virion. It is found in the host cell junction. The protein resides in the host plasmodesma. Functionally, plays a role in virus cell-to-cell and plant-to-plant transmission. Interacts with virion icosahedral capsid and movement protein, thereby facilitating virion cell-to-cell transmission through plasmodesmata opened by viral movement protein. Also interacts with aphid transmission factor, attaching the virion to aphid stylet when the animal feeds on an virus infected plant. Aphid saliva may later detach the virion, inducing release of infectious particles when the animal feeds on a new plant. This chain is Virion-associated protein, found in Cauliflower mosaic virus (strain Strasbourg) (CaMV).